The following is a 1132-amino-acid chain: Phytochrome B (1132 aa).

Residues 1–11 (MASGSRTKHSH) show a composition bias toward basic residues. A disordered region spans residues 1–27 (MASGSRTKHSHQSGQGQVQAQSSGTSN). A compositionally biased stretch (low complexity) spans 12 to 26 (QSGQGQVQAQSSGTS). The GAF domain occupies 231 to 409 (DVKLLCDTVV…AFGLQLNMEL (179 aa)). Residue Cys-336 coordinates phytochromobilin. 2 consecutive PAS domains span residues 623–694 (VARE…LRGE) and 757–828 (DYKA…MIVL). Positions 905 to 1125 (YLCQEIKSPL…LIILDLPMTR (221 aa)) constitute a Histidine kinase domain.

It belongs to the phytochrome family. In terms of assembly, homodimer. In terms of processing, contains one covalently linked phytochromobilin chromophore.

Regulatory photoreceptor which exists in two forms that are reversibly interconvertible by light: the Pr form that absorbs maximally in the red region of the spectrum and the Pfr form that absorbs maximally in the far-red region. Photoconversion of Pr to Pfr induces an array of morphogenic responses, whereas reconversion of Pfr to Pr cancels the induction of those responses. Pfr controls the expression of a number of nuclear genes including those encoding the small subunit of ribulose-bisphosphate carboxylase, chlorophyll A/B binding protein, protochlorophyllide reductase, rRNA, etc. It also controls the expression of its own gene(s) in a negative feedback fashion. In Nicotiana tabacum (Common tobacco), this protein is Phytochrome B (PHYB).